A 152-amino-acid polypeptide reads, in one-letter code: Transcriptional regulator MraZ (152 aa).

2 SpoVT-AbrB domains span residues 5-52 (ASAI…PLQE) and 81-124 (AHEC…DEAA).

The protein belongs to the MraZ family. In terms of assembly, forms oligomers.

The protein localises to the cytoplasm. The protein resides in the nucleoid. The sequence is that of Transcriptional regulator MraZ from Shewanella denitrificans (strain OS217 / ATCC BAA-1090 / DSM 15013).